Here is a 469-residue protein sequence, read N- to C-terminus: Uronate isomerase (469 aa).

Belongs to the metallo-dependent hydrolases superfamily. Uronate isomerase family.

It catalyses the reaction D-glucuronate = D-fructuronate. It carries out the reaction aldehydo-D-galacturonate = keto-D-tagaturonate. It participates in carbohydrate metabolism; pentose and glucuronate interconversion. The sequence is that of Uronate isomerase from Yersinia enterocolitica serotype O:8 / biotype 1B (strain NCTC 13174 / 8081).